The primary structure comprises 261 residues: Metallo-beta-lactamase fold-containing protein ST1585 (261 aa).

Positions 58, 60, 62, 63, 148, 165, and 207 each coordinate Zn(2+).

This sequence belongs to the metallo-beta-lactamase superfamily. Monomer.

The chain is Metallo-beta-lactamase fold-containing protein ST1585 from Sulfurisphaera tokodaii (strain DSM 16993 / JCM 10545 / NBRC 100140 / 7) (Sulfolobus tokodaii).